A 151-amino-acid chain; its full sequence is Methylglyoxal synthase (151 aa).

An MGS-like domain is found at 6 to 151 (RTMPAHKHVA…DYDAYLAERT (146 aa)). Substrate-binding positions include His-19, Lys-23, 45 to 48 (TGTT), and 65 to 66 (SG). Asp-71 functions as the Proton donor/acceptor in the catalytic mechanism. A substrate-binding site is contributed by His-98.

Belongs to the methylglyoxal synthase family.

The enzyme catalyses dihydroxyacetone phosphate = methylglyoxal + phosphate. Its function is as follows. Catalyzes the formation of methylglyoxal from dihydroxyacetone phosphate. The sequence is that of Methylglyoxal synthase from Vibrio campbellii (strain ATCC BAA-1116).